A 342-amino-acid polypeptide reads, in one-letter code: Organic solute transporter alpha-like protein 2 (342 aa).

The Extracellular segment spans residues 1–50; sequence MLEISPWETLVKLLTDSLLNCTGTHEDVPHAKTFLRSLTTTYIASLAVAT. N-linked (GlcNAc...) asparagine glycosylation occurs at Asn20. Residues 51 to 71 form a helical membrane-spanning segment; it reads AVTVGTVCLAVLHLIYIHFYI. Residues 72-79 lie on the Cytoplasmic side of the membrane; sequence THSSRRLH. A helical membrane pass occupies residues 80-100; it reads IVLLACTAPLVSLLALVAMYM. At 101 to 109 the chain is on the extracellular side; that stretch reads PRVWFLSHL. A helical membrane pass occupies residues 110–130; it reads LSFLYFSFALWVIICLLLHIF. The Cytoplasmic segment spans residues 131-176; the sequence is DGHHALVTKMMQRLQYVEIATPPFCCLFPCLPKVRLEGKKIRWCEL. The helical transmembrane segment at 177-197 threads the bilayer; the sequence is MVMQAPIVRLFATLVSLVIYF. Residues 198-208 lie on the Extracellular side of the membrane; sequence EYQDQGLVPLK. Residues 209–229 traverse the membrane as a helical segment; sequence VLDFITLPSLLAGIYGTHILV. Topologically, residues 230–243 are cytoplasmic; it reads TTVSRMDELISYRY. The chain crosses the membrane as a helical span at residues 244–264; it reads VVVFRLLDFFFMVFGLQQPVF. At 265-290 the chain is on the extracellular side; the sequence is DFLARYGAFGCGTVLPAIETSFYWKN. Residues 291-311 form a helical membrane-spanning segment; sequence FFTVIEAFCVTLISTVLLQPS. The Cytoplasmic portion of the chain corresponds to 312–342; it reads KSSFFDKHPSCRSMSSARSTITDVDTDESTT.

It belongs to the OST-alpha family.

Its subcellular location is the cell membrane. Functionally, probable transporter. This is Organic solute transporter alpha-like protein 2 (osta-2) from Caenorhabditis elegans.